A 766-amino-acid polypeptide reads, in one-letter code: Transcription factor GTE4 (766 aa).

Disordered stretches follow at residues 87-108, 234-262, and 388-412; these read GTNSHGDKNLTEAPSENLPGDD, RDTTDAQQPAGLTSDSAHATAAGSMPMEE, and GDKLPPAESNKKSKSSSKKQGGDVG. Residues 238–250 show a composition bias toward polar residues; sequence DAQQPAGLTSDSA. Residues 416–522 form the Bromo domain; that stretch reads GAGTKVFKNC…QIFEERWAVI (107 aa). Disordered stretches follow at residues 544-606 and 687-766; these read TMRS…NKRD and ARAE…SDQT. The segment covering 574–589 has biased composition (low complexity); that stretch reads PTTTPGRTPTSATPSG. The NET domain maps to 597–678; that stretch reads PKANEPNKRD…NYKKGLSKKK (82 aa). Residues 736–766 show a composition bias toward low complexity; sequence SRSSSSSSSSSSSSSSDSDSDSSSSSGSDQT.

Ubiquitously expressed.

Its subcellular location is the nucleus. Functionally, involved in the activation and maintenance of cell division in the meristems and by this controls cell numbers in differentiated organs. Its action in cell cycle regulation may be directed through the RB-E2F pathway. This Arabidopsis thaliana (Mouse-ear cress) protein is Transcription factor GTE4 (GTE4).